We begin with the raw amino-acid sequence, 376 residues long: Anhydro-N-acetylmuramic acid kinase (376 aa).

11–18 (GTSMDGVD) is an ATP binding site.

It belongs to the anhydro-N-acetylmuramic acid kinase family.

The catalysed reaction is 1,6-anhydro-N-acetyl-beta-muramate + ATP + H2O = N-acetyl-D-muramate 6-phosphate + ADP + H(+). Its pathway is amino-sugar metabolism; 1,6-anhydro-N-acetylmuramate degradation. It functions in the pathway cell wall biogenesis; peptidoglycan recycling. In terms of biological role, catalyzes the specific phosphorylation of 1,6-anhydro-N-acetylmuramic acid (anhMurNAc) with the simultaneous cleavage of the 1,6-anhydro ring, generating MurNAc-6-P. Is required for the utilization of anhMurNAc either imported from the medium or derived from its own cell wall murein, and thus plays a role in cell wall recycling. This chain is Anhydro-N-acetylmuramic acid kinase, found in Acinetobacter baylyi (strain ATCC 33305 / BD413 / ADP1).